Reading from the N-terminus, the 445-residue chain is MREIVHIQAGQCGNQIGAKFWEVISDEHGIDPTGSYHGDSDLQLERINVYYNEAAGNKYVPRAILVDLEPGTMDSVRSGPFGQIFRPDNFVFGQSGAGNNWAKGHYTEGAELVDSVLDVVRKESESCDCLQGFQLTHSLGGGTGSGMGTLLISKIREEYPDRIMNTFSVMPSPKVSDTVVEPYNATLSVHQLVENTDETYSIDNEALYDICFRTLKLTTPTYGDLNHLVSATMSGVTTCLRFPGQLNADLRKLAVNMVPFPRLHFFMPGFAPLTSRGSQQYRALTVPELTQQMFDSKNMMAACDPRHGRYLTVAAIFRGRMSMKEVDEQMLNVQNKNSSYFVEWIPNNVKTAVCDIPPRGLKMSATFIGNSTAIQELFKRISEQFTAMFRRKAFLHWYTGEGMDEMEFTEAESNMNDLVSEYQQYQDATADEQGEFEEEEGEDEA.

The MREI motif signature appears at Met1–Ile4. Gln11 serves as a coordination point for GTP. Residue Ser40 is modified to Phosphoserine. N6-acetyllysine; alternate is present on Lys58. At Lys58 the chain carries N6-succinyllysine; alternate. A Glycyl lysine isopeptide (Lys-Gly) (interchain with G-Cter in ubiquitin); alternate cross-link involves residue Lys58. GTP-binding residues include Glu69, Ser138, Gly142, Thr143, and Gly144. Glu69 provides a ligand contact to Mg(2+). The residue at position 172 (Ser172) is a Phosphoserine; by CDK1. Residues Asn204 and Asn226 each contribute to the GTP site. Residues Thr285 and Thr290 each carry the phosphothreonine modification. At Arg318 the chain carries Omega-N-methylarginine. Lys324 participates in a covalent cross-link: Glycyl lysine isopeptide (Lys-Gly) (interchain with G-Cter in ubiquitin). Residues Tyr422–Ala445 form a disordered region. Acidic residues predominate over residues Thr429 to Ala445. The residue at position 438 (Glu438) is a 5-glutamyl polyglutamate.

The protein belongs to the tubulin family. In terms of assembly, interacts with ZNRF1. Part of a complex composed at least of ASH2L, EMSY, HCFC1, HSPA8, CCAR2, MATR3, MKI67, RBBP5, TUBB2A, WDR5 and ZNF335; this complex may have a histone H3-specific methyltransferase activity. Dimer of alpha and beta chains. A typical microtubule is a hollow water-filled tube with an outer diameter of 25 nm and an inner diameter of 15 nM. Alpha-beta heterodimers associate head-to-tail to form protofilaments running lengthwise along the microtubule wall with the beta-tubulin subunit facing the microtubule plus end conferring a structural polarity. Microtubules usually have 13 protofilaments but different protofilament numbers can be found in some organisms and specialized cells. It depends on Mg(2+) as a cofactor. In terms of processing, some glutamate residues at the C-terminus are polyglutamylated, resulting in polyglutamate chains on the gamma-carboxyl group. Polyglutamylation plays a key role in microtubule severing by spastin (SPAST). SPAST preferentially recognizes and acts on microtubules decorated with short polyglutamate tails: severing activity by SPAST increases as the number of glutamates per tubulin rises from one to eight, but decreases beyond this glutamylation threshold. Glutamylation is also involved in cilia motility. Post-translationally, some glutamate residues at the C-terminus are monoglycylated but not polyglycylated due to the absence of functional TTLL10 in human. Monoglycylation is mainly limited to tubulin incorporated into cilia and flagella axonemes, which is required for their stability and maintenance. Flagella glycylation controls sperm motility. Both polyglutamylation and monoglycylation can coexist on the same protein on adjacent residues, and lowering glycylation levels increases polyglutamylation, and reciprocally. Phosphorylated on Ser-172 by CDK1 during the cell cycle, from metaphase to telophase, but not in interphase. This phosphorylation inhibits tubulin incorporation into microtubules. High expression in brain, where it represents 30% of all beta-tubulins.

The protein localises to the cytoplasm. It localises to the cytoskeleton. In terms of biological role, tubulin is the major constituent of microtubules, a cylinder consisting of laterally associated linear protofilaments composed of alpha- and beta-tubulin heterodimers. Microtubules grow by the addition of GTP-tubulin dimers to the microtubule end, where a stabilizing cap forms. Below the cap, tubulin dimers are in GDP-bound state, owing to GTPase activity of alpha-tubulin. The chain is Tubulin beta-2A chain (TUBB2A) from Homo sapiens (Human).